A 71-amino-acid polypeptide reads, in one-letter code: Large ribosomal subunit protein bL31 (71 aa).

4 residues coordinate Zn(2+): Cys16, Cys18, Cys38, and Cys41.

The protein belongs to the bacterial ribosomal protein bL31 family. Type A subfamily. Part of the 50S ribosomal subunit. Requires Zn(2+) as cofactor.

Its function is as follows. Binds the 23S rRNA. This Neisseria meningitidis serogroup A / serotype 4A (strain DSM 15465 / Z2491) protein is Large ribosomal subunit protein bL31.